The following is a 258-amino-acid chain: Ribosomal RNA small subunit methyltransferase J (258 aa).

S-adenosyl-L-methionine-binding positions include 123 to 124 and D177; that span reads ER. The disordered stretch occupies residues 232-258; the sequence is IDGPKPSHSLEGKSSRYDIYPKKALKA. A compositionally biased stretch (basic and acidic residues) spans 239-252; sequence HSLEGKSSRYDIYP.

It belongs to the methyltransferase superfamily. RsmJ family.

The protein resides in the cytoplasm. The enzyme catalyses guanosine(1516) in 16S rRNA + S-adenosyl-L-methionine = N(2)-methylguanosine(1516) in 16S rRNA + S-adenosyl-L-homocysteine + H(+). Its function is as follows. Specifically methylates the guanosine in position 1516 of 16S rRNA. The chain is Ribosomal RNA small subunit methyltransferase J from Pseudomonas putida (strain W619).